The sequence spans 195 residues: Holliday junction branch migration complex subunit RuvA (195 aa).

The segment at 1-63 is domain I; the sequence is MIASVRGEVI…EDSMTLYGFV (63 aa). Residues 64 to 142 are domain II; it reads DGDARDLFLT…PVSAGGGAAV (79 aa). The tract at residues 143–150 is flexible linker; sequence GGHAIRGP. Residues 150–195 form a domain III region; that stretch reads PVVEALVGLGFAAKQAEEATDKVLANDPEATTSSALRAALSMLGKK.

The protein belongs to the RuvA family. Homotetramer. Forms an RuvA(8)-RuvB(12)-Holliday junction (HJ) complex. HJ DNA is sandwiched between 2 RuvA tetramers; dsDNA enters through RuvA and exits via RuvB. An RuvB hexamer assembles on each DNA strand where it exits the tetramer. Each RuvB hexamer is contacted by two RuvA subunits (via domain III) on 2 adjacent RuvB subunits; this complex drives branch migration. In the full resolvosome a probable DNA-RuvA(4)-RuvB(12)-RuvC(2) complex forms which resolves the HJ.

The protein localises to the cytoplasm. The RuvA-RuvB-RuvC complex processes Holliday junction (HJ) DNA during genetic recombination and DNA repair, while the RuvA-RuvB complex plays an important role in the rescue of blocked DNA replication forks via replication fork reversal (RFR). RuvA specifically binds to HJ cruciform DNA, conferring on it an open structure. The RuvB hexamer acts as an ATP-dependent pump, pulling dsDNA into and through the RuvAB complex. HJ branch migration allows RuvC to scan DNA until it finds its consensus sequence, where it cleaves and resolves the cruciform DNA. The chain is Holliday junction branch migration complex subunit RuvA from Mycolicibacterium smegmatis (strain ATCC 700084 / mc(2)155) (Mycobacterium smegmatis).